The sequence spans 296 residues: Protoheme IX farnesyltransferase (296 aa).

The next 9 helical transmembrane spans lie at 14–34, 36–56, 75–95, 99–119, 133–153, 163–183, 209–229, 234–254, and 265–285; these read IIFG…KGVI, YPLF…GCVF, VLVK…ILGI, LLLY…GFVI, VYGT…GYCA, LILL…IAIF, ITLY…SGYA, LVVA…GYKA, and FVFS…DFNV.

Belongs to the UbiA prenyltransferase family. Protoheme IX farnesyltransferase subfamily.

The protein resides in the cell inner membrane. It catalyses the reaction heme b + (2E,6E)-farnesyl diphosphate + H2O = Fe(II)-heme o + diphosphate. Its pathway is porphyrin-containing compound metabolism; heme O biosynthesis; heme O from protoheme: step 1/1. Functionally, converts heme B (protoheme IX) to heme O by substitution of the vinyl group on carbon 2 of heme B porphyrin ring with a hydroxyethyl farnesyl side group. The protein is Protoheme IX farnesyltransferase of Yersinia enterocolitica serotype O:8 / biotype 1B (strain NCTC 13174 / 8081).